We begin with the raw amino-acid sequence, 94 residues long: Putative pterin-4-alpha-carbinolamine dehydratase (94 aa).

It belongs to the pterin-4-alpha-carbinolamine dehydratase family.

The enzyme catalyses (4aS,6R)-4a-hydroxy-L-erythro-5,6,7,8-tetrahydrobiopterin = (6R)-L-erythro-6,7-dihydrobiopterin + H2O. This is Putative pterin-4-alpha-carbinolamine dehydratase from Koribacter versatilis (strain Ellin345).